A 219-amino-acid polypeptide reads, in one-letter code: Transmembrane protein 125 (219 aa).

Helical transmembrane passes span 36–56, 68–88, 114–134, and 147–167; these read LCFAVAVGLVAGCGAGGVALL, LAVGTALCLLALLVLVKQLMS, ALVVLLSGLVLLVTGLTLAGL, and MLSVGITLAASGALLLLGLLL.

The protein resides in the membrane. This Bos taurus (Bovine) protein is Transmembrane protein 125 (TMEM125).